A 294-amino-acid polypeptide reads, in one-letter code: 4-hydroxy-tetrahydrodipicolinate synthase (294 aa).

Pyruvate is bound at residue T45. The active-site Proton donor/acceptor is Y133. The active-site Schiff-base intermediate with substrate is K162. I204 contributes to the pyruvate binding site.

The protein belongs to the DapA family. In terms of assembly, homotetramer; dimer of dimers.

It is found in the cytoplasm. It carries out the reaction L-aspartate 4-semialdehyde + pyruvate = (2S,4S)-4-hydroxy-2,3,4,5-tetrahydrodipicolinate + H2O + H(+). Its pathway is amino-acid biosynthesis; L-lysine biosynthesis via DAP pathway; (S)-tetrahydrodipicolinate from L-aspartate: step 3/4. Functionally, catalyzes the condensation of (S)-aspartate-beta-semialdehyde [(S)-ASA] and pyruvate to 4-hydroxy-tetrahydrodipicolinate (HTPA). This is 4-hydroxy-tetrahydrodipicolinate synthase from Bartonella henselae (strain ATCC 49882 / DSM 28221 / CCUG 30454 / Houston 1) (Rochalimaea henselae).